Consider the following 471-residue polypeptide: Ubiquitin carboxyl-terminal hydrolase calypso (471 aa).

Residues 45–276 form the UCH catalytic domain; sequence GWLELESDPG…IRFNLMAVVP (232 aa). The active-site Nucleophile is C131. H213 (proton donor) is an active-site residue. One can recognise a ULD domain in the interval 375–403; the sequence is NYDKFICTFLSMLAHQGVLGELVSQHLLP. A positively charged C-terminal tail required for binding nucleosomes region spans residues 405–471; the sequence is KKVSGQGAAN…KGRNKCRKRK (67 aa). The segment at 410–471 is disordered; it reads QGAANRISKQ…KGRNKCRKRK (62 aa). Residues 420-447 show a composition bias toward low complexity; that stretch reads STTASAGGSTTGATASTPKTQQQQAAAA. Positions 457–471 are enriched in basic residues; the sequence is PGRRRKGRNKCRKRK.

Belongs to the peptidase C12 family. BAP1 subfamily. As to quaternary structure, catalytic component of the polycomb repressive deubiquitinase (PR-DUB) complex, at least composed of caly/calypso, Asx and sba (MBD5/6 homolog). The PR-DUB complex associates with nucleosomes to mediate deubiquitination of histone H2AK118ub1 substrates; the association requires the positively charged C-terminal tail of caly, probably due to direct binding of DNA. Interacts (via ULD domain) with Asx (via DEUBAD domain); the interaction produces a stable heterodimer with a composite binding site for ubiquitin. Homodimerizes (via coiled-coil hinge-region between the UCH and ULD domains) to mediate assembly of 2 copies of the caly-Asx heterodimer into a bisymmetric tetramer; dimerization enhances PR-DUB association with nucleosomes.

Its subcellular location is the nucleus. It catalyses the reaction Thiol-dependent hydrolysis of ester, thioester, amide, peptide and isopeptide bonds formed by the C-terminal Gly of ubiquitin (a 76-residue protein attached to proteins as an intracellular targeting signal).. In terms of biological role, catalytic component of the polycomb repressive deubiquitinase (PR-DUB) complex, a complex that specifically mediates deubiquitination of histone H2A monoubiquitinated at 'Lys-119' (H2AK118ub1). Mediates bisymmetric organization of the PR-DUB complex and is involved in association with nucleosomes to mediate deubiquitination. Does not deubiquitinate monoubiquitinated histone H2B. Required to maintain the transcriptionally repressive state of homeotic genes throughout development. The PR-DUB complex has weak or no activity toward 'Lys-48'- and 'Lys-63'-linked polyubiquitin chains. Polycomb group (PcG) protein. The polypeptide is Ubiquitin carboxyl-terminal hydrolase calypso (Drosophila yakuba (Fruit fly)).